The chain runs to 450 residues: Phosphoglucosamine mutase (450 aa).

The active-site Phosphoserine intermediate is the S101. 4 residues coordinate Mg(2+): S101, D243, D245, and D247. Phosphoserine is present on S101.

Belongs to the phosphohexose mutase family. It depends on Mg(2+) as a cofactor. Post-translationally, activated by phosphorylation.

It carries out the reaction alpha-D-glucosamine 1-phosphate = D-glucosamine 6-phosphate. Functionally, catalyzes the conversion of glucosamine-6-phosphate to glucosamine-1-phosphate. The protein is Phosphoglucosamine mutase of Desulfotalea psychrophila (strain LSv54 / DSM 12343).